The following is a 369-amino-acid chain: Dual specificity protein phosphatase 1-A (369 aa).

Residues 21-138 (RAHKCLILDC…FSAQCPEFCT (118 aa)) form the Rhodanese domain. Thr-168 bears the Phosphothreonine; by MAPK1 mark. One can recognise a Tyrosine-protein phosphatase domain in the interval 175–316 (GPVEILPFLY…LLQFESQVLA (142 aa)). Cys-260 (phosphocysteine intermediate) is an active-site residue.

The protein belongs to the protein-tyrosine phosphatase family. Non-receptor class dual specificity subfamily. Post-translationally, phosphorylated by MAPK1/ERK2 at Thr-168 and at one or more serine residues in a progesterone-dependent manner. Phosphorylation reduces its rate of degradation but does not seem to affect phosphatase activity. As to expression, expressed in XIK-2 kidney cells.

The protein localises to the nucleus. It carries out the reaction O-phospho-L-seryl-[protein] + H2O = L-seryl-[protein] + phosphate. It catalyses the reaction O-phospho-L-threonyl-[protein] + H2O = L-threonyl-[protein] + phosphate. The catalysed reaction is O-phospho-L-tyrosyl-[protein] + H2O = L-tyrosyl-[protein] + phosphate. In terms of biological role, dual specificity phosphatase that dephosphorylates MAP kinase MAPK1/ERK2 on both 'Thr-188' and 'Tyr-190', regulating its activity during the meiotic cell cycle. The protein is Dual specificity protein phosphatase 1-A of Xenopus laevis (African clawed frog).